Here is a 904-residue protein sequence, read N- to C-terminus: Protein translocase subunit SecA (904 aa).

ATP contacts are provided by residues Gln89, 107 to 111 (GEGKT), and Asp496. Residues 870-904 (GGFQELSSGTPSPTVTVTTSSGGGTERKTSRRRKR) are disordered. Residues 876 to 889 (SSGTPSPTVTVTTS) are compositionally biased toward low complexity.

It belongs to the SecA family. In terms of assembly, monomer and homodimer. Part of the essential Sec protein translocation apparatus which comprises SecA, SecYEG and auxiliary proteins SecDF. Other proteins may also be involved.

The protein localises to the cell inner membrane. It is found in the cytoplasm. The enzyme catalyses ATP + H2O + cellular proteinSide 1 = ADP + phosphate + cellular proteinSide 2.. In terms of biological role, part of the Sec protein translocase complex. Interacts with the SecYEG preprotein conducting channel. Has a central role in coupling the hydrolysis of ATP to the transfer of proteins into and across the cell membrane, serving as an ATP-driven molecular motor driving the stepwise translocation of polypeptide chains across the membrane. The chain is Protein translocase subunit SecA from Leptospira borgpetersenii serovar Hardjo-bovis (strain JB197).